A 109-amino-acid polypeptide reads, in one-letter code: Small ribosomal subunit protein bS16 (109 aa).

The disordered stretch occupies residues 87–109; the sequence is ALRETPKKSAPKAKAQERAKAAG. Residues 100–109 are compositionally biased toward basic and acidic residues; that stretch reads KAQERAKAAG.

It belongs to the bacterial ribosomal protein bS16 family.

The chain is Small ribosomal subunit protein bS16 from Rhodospirillum centenum (strain ATCC 51521 / SW).